Reading from the N-terminus, the 208-residue chain is MSMGPISELLTVSYPIAETFHSLQGEGAWAGGNAFFIRLGGCDVHCPWCDQKETWPTQHHPRQTVTELVQQAVTAKPSFVVITGGEPLMHDLQPLCKTLKNQGLRLHLETSGAYPLTGQFDWITLSPKPYKLPQAAIYPLANELKVIISQDEDFDWAEMEARKISPGTPLYLQAEWETEAMNEKIFAYILTHSQWRLSLQTHKYLGVR.

Residues 23-25 and R38 contribute to the substrate site; that span reads LQG. The Radical SAM core domain occupies 29–208; the sequence is WAGGNAFFIR…LQTHKYLGVR (180 aa). C42, C46, and C49 together coordinate [4Fe-4S] cluster. Residue T83 participates in substrate binding. Residues G85 and 126 to 128 each bind S-adenosyl-L-methionine; that span reads SPK.

This sequence belongs to the radical SAM superfamily. 7-carboxy-7-deazaguanine synthase family. In terms of assembly, homodimer. Requires [4Fe-4S] cluster as cofactor. The cofactor is S-adenosyl-L-methionine. Mg(2+) is required as a cofactor.

It carries out the reaction 6-carboxy-5,6,7,8-tetrahydropterin + H(+) = 7-carboxy-7-deazaguanine + NH4(+). It functions in the pathway purine metabolism; 7-cyano-7-deazaguanine biosynthesis. Catalyzes the complex heterocyclic radical-mediated conversion of 6-carboxy-5,6,7,8-tetrahydropterin (CPH4) to 7-carboxy-7-deazaguanine (CDG), a step common to the biosynthetic pathways of all 7-deazapurine-containing compounds. This is 7-carboxy-7-deazaguanine synthase from Synechocystis sp. (strain ATCC 27184 / PCC 6803 / Kazusa).